Consider the following 146-residue polypeptide: Hemoglobin subunit beta (146 aa).

The region spanning 2-146 is the Globin domain; that stretch reads HWSAEEKQLI…VAHALARKYH (145 aa). Residues H63 and H92 each coordinate heme b.

Belongs to the globin family. As to quaternary structure, heterotetramer of two alpha chains and two beta chains. Red blood cells.

Involved in oxygen transport from the lung to the various peripheral tissues. The chain is Hemoglobin subunit beta (HBB) from Columba livia (Rock dove).